Consider the following 368-residue polypeptide: tRNA-specific 2-thiouridylase MnmA (368 aa).

ATP contacts are provided by residues 12–19 and Met-38; that span reads AMSGGVDS. The active-site Nucleophile is Cys-110. A disulfide bridge connects residues Cys-110 and Cys-207. Residue Gly-134 participates in ATP binding. Residues 157–159 form an interaction with tRNA region; it reads KDQ. Residue Cys-207 is the Cysteine persulfide intermediate of the active site. An interaction with tRNA region spans residues 312 to 313; it reads RY.

This sequence belongs to the MnmA/TRMU family.

The protein localises to the cytoplasm. It carries out the reaction S-sulfanyl-L-cysteinyl-[protein] + uridine(34) in tRNA + AH2 + ATP = 2-thiouridine(34) in tRNA + L-cysteinyl-[protein] + A + AMP + diphosphate + H(+). Catalyzes the 2-thiolation of uridine at the wobble position (U34) of tRNA, leading to the formation of s(2)U34. The chain is tRNA-specific 2-thiouridylase MnmA from Geobacter metallireducens (strain ATCC 53774 / DSM 7210 / GS-15).